The following is an 811-amino-acid chain: Probable phosphoketolase (811 aa).

Belongs to the XFP family. It depends on thiamine diphosphate as a cofactor.

The protein is Probable phosphoketolase of Methylococcus capsulatus (strain ATCC 33009 / NCIMB 11132 / Bath).